The primary structure comprises 338 residues: MKTDDFDYKLPEELIASYPLENRDASRLLKLNKQTGEIADYKFTDFIDFINPGDLLVFNNSKVMLARLYGSKTTGAKLEYLIERIKNPKLFETHIKANRSPAIGSEIYVESTHAKVLDKDGGMYLLEIQGDKDIYQLMEEFGHIPLPPYMKRDDEEFDAERYQTVYAQDLGSVAAPTAGLHFSKELMQQIKDKGVDIAYITLHVGSGTFKPVQVDDVESHKMHAEVISVPVEVCQKIRQTKENGGRVIAIGTTSVRSLETAGQNGQIEPYQGETDIFLYPGKKFNVVDAMITNFHLPKSTLIMLVSAFADKEKIIKAYEHAIAERYRFFSYGDAMFIF.

It belongs to the QueA family. In terms of assembly, monomer.

The protein resides in the cytoplasm. The enzyme catalyses 7-aminomethyl-7-carbaguanosine(34) in tRNA + S-adenosyl-L-methionine = epoxyqueuosine(34) in tRNA + adenine + L-methionine + 2 H(+). It participates in tRNA modification; tRNA-queuosine biosynthesis. In terms of biological role, transfers and isomerizes the ribose moiety from AdoMet to the 7-aminomethyl group of 7-deazaguanine (preQ1-tRNA) to give epoxyqueuosine (oQ-tRNA). This is S-adenosylmethionine:tRNA ribosyltransferase-isomerase from Francisella tularensis subsp. mediasiatica (strain FSC147).